We begin with the raw amino-acid sequence, 354 residues long: Protein sex-lethal (354 aa).

The disordered stretch occupies residues 1–20; sequence MYGNNNPGSNNNNGGYPPYG. RRM domains lie at 127-205 and 213-293; these read TNLI…YARP and TNLY…LAQE.

As to quaternary structure, part of a complex containing fl(2)d, Sxl and vir. Interacts with nito. Interacts with Unr; cooperates with Sxl to prevent translation of msl-2 transcripts. Interacts with how; promoting nuclear retention of msl-2 transcripts. The embryo-specific isoform is not expressed in the pole cells, which are the progenitors of the germline.

Its subcellular location is the nucleus. It is found in the cytoplasm. In terms of biological role, sex determination switch protein, which controls sexual development and dosage compensation in females. Sxl protein is only active in females: it is inactive in males throughout development. Acts as a mRNA-binding protein, which specifically binds to a subset of pre-mRNAs and mRNAs and regulates their processing and/or translation. Promotes sexual development by controlling the female-specific alternative splicing of the transformer (tra) pre-mRNA: binds tightly to a characteristic uridine-rich polypyrimidine tract at the non-sex specific 3' splice site in one of the tra introns, preventing the general splicing factor U2AF from binding to this site and forcing it to bind to the female-specific 3' splice site. Acts as an inhibitor of dosage compensation in females by preventing production of msl-2 protein, an essential component of the MSL complex, the complex that mediates X-chromosome dosage compensation. Specifially binds to uridine stretches in both the 5'- and 3'-UTR of msl-2 transcripts. Sxl first acts at the splicing level by promoting retention of an intron in the 5' UTR of msl-2 pre-mRNA. The retained intron contains Sxl-binding sites that are required for subsequent steps of repression: after msl-2 mRNA export into the cytoplasm, Sxl coordinates its translational repression by targeting early steps of translation initiation. Together with how, Sxl also prevents production of msl-2 protein by preventing nuclear export of msl-2 transcripts. This chain is Protein sex-lethal, found in Drosophila subobscura (Fruit fly).